The primary structure comprises 612 residues: Threonine--tRNA ligase (612 aa).

A catalytic region spans residues 218 to 509 (DHRKLGVELG…LSEHFGGNFP (292 aa)). The Zn(2+) site is built by Cys310, His361, and His486.

The protein belongs to the class-II aminoacyl-tRNA synthetase family. Homodimer. Requires Zn(2+) as cofactor.

It is found in the cytoplasm. The enzyme catalyses tRNA(Thr) + L-threonine + ATP = L-threonyl-tRNA(Thr) + AMP + diphosphate + H(+). Catalyzes the attachment of threonine to tRNA(Thr) in a two-step reaction: L-threonine is first activated by ATP to form Thr-AMP and then transferred to the acceptor end of tRNA(Thr). Also edits incorrectly charged L-seryl-tRNA(Thr). The protein is Threonine--tRNA ligase of Helicobacter pylori (strain G27).